The following is a 23-amino-acid chain: Aldehyde dehydrogenase (23 aa).

This sequence belongs to the aldehyde dehydrogenase family.

The enzyme catalyses an aldehyde + NAD(+) + H2O = a carboxylate + NADH + 2 H(+). The chain is Aldehyde dehydrogenase from Moraxella sp. (strain TAE123).